The primary structure comprises 214 residues: MQHNKILIRQLGLQPYEPISQAMHEFTDARDEDTLDEIWLVEHHPVFTQGQAGKAEHVLVPGDIPVIQSDRGGQVTYHGPGQQVMYVLLNLKRRKLGVRELVTLLEQTVVNTLAEYGIESHPRADAPGVYVGDRKICSLGLRIRKGCSFHGLALNIAMDLAPFLRINPCGYAGMEMTQMRQWQPEVTPETVAPRLVANLLALLNHPPHEYLPQQ.

Positions 32-207 constitute a BPL/LPL catalytic domain; it reads EDTLDEIWLV…NLLALLNHPP (176 aa). Substrate contacts are provided by residues 71–78, 138–140, and 151–153; these read RGGQVTYH, SLG, and GLA. The Acyl-thioester intermediate role is filled by C169.

This sequence belongs to the LipB family.

It localises to the cytoplasm. It carries out the reaction octanoyl-[ACP] + L-lysyl-[protein] = N(6)-octanoyl-L-lysyl-[protein] + holo-[ACP] + H(+). Its pathway is protein modification; protein lipoylation via endogenous pathway; protein N(6)-(lipoyl)lysine from octanoyl-[acyl-carrier-protein]: step 1/2. Catalyzes the transfer of endogenously produced octanoic acid from octanoyl-acyl-carrier-protein onto the lipoyl domains of lipoate-dependent enzymes. Lipoyl-ACP can also act as a substrate although octanoyl-ACP is likely to be the physiological substrate. This Klebsiella pneumoniae (strain 342) protein is Octanoyltransferase.